We begin with the raw amino-acid sequence, 160 residues long: Major pollen allergen Bet v 1-J (160 aa).

The brassinolide site is built by lysine 55, tyrosine 82, tyrosine 84, and asparagine 101. Hydrophobic ligand pocket regions lie at residues 116–118 (KIN) and 133–141 (QIKASKEMG).

Belongs to the BetVI family. Pollen.

The protein resides in the cytoplasm. Functionally, may be a general steroid carrier protein. The chain is Major pollen allergen Bet v 1-J from Betula pendula (European white birch).